Reading from the N-terminus, the 522-residue chain is Glucans biosynthesis protein G (522 aa).

The first 33 residues, 1 to 33 (MPNNKFFVKSSKASLRWLGATVLLTLYALPSWA), serve as a signal peptide directing secretion.

Belongs to the OpgD/OpgG family.

It localises to the periplasm. It functions in the pathway glycan metabolism; osmoregulated periplasmic glucan (OPG) biosynthesis. Functionally, involved in the biosynthesis of osmoregulated periplasmic glucans (OPGs). This chain is Glucans biosynthesis protein G, found in Sodalis glossinidius (strain morsitans).